Reading from the N-terminus, the 491-residue chain is Serralysin (491 aa).

Positions 1 to 16 (MGSFLLKKAVGLSNIS) are excised as a propeptide. His-186 serves as a coordination point for Zn(2+). The active site involves Glu-187. Positions 190, 196, and 226 each coordinate Zn(2+). Ca(2+)-binding residues include Arg-263, Gly-265, Asp-295, Gly-297, Gly-298, Asp-300, Thr-337, Glu-339, Gly-344, Gly-346, Asp-348, Asn-353, Ala-355, Asn-357, Gly-361, Gly-362, Gly-364, Asp-366, Gly-370, Gly-373, Asp-384, Gly-388, Gly-389, Gly-391, Asp-402, Asp-409, and Asp-419. 3 Hemolysin-type calcium-binding repeats span residues 342–359 (IGGF…DNTL), 360–377 (IGGE…NNTI), and 378–395 (YGGR…SNTF).

This sequence belongs to the peptidase M10B family. Ca(2+) serves as cofactor. The cofactor is Zn(2+).

Its subcellular location is the secreted. The enzyme catalyses Preferential cleavage of bonds with hydrophobic residues in P1'.. Its activity is regulated as follows. Ca(2+) increases protease activity. Functionally, one of the virulence factors produced during swarmer cell differentiation of the bacteria, which seems to be associated with pathogenesis. The protease activity is limited to IgA1, IgA2, as well as IgG degradation. The chain is Serralysin (zapA) from Proteus mirabilis.